Consider the following 222-residue polypeptide: Sugar fermentation stimulation protein homolog (222 aa).

Belongs to the SfsA family.

The protein is Sugar fermentation stimulation protein homolog of Thermotoga sp. (strain RQ2).